A 506-amino-acid chain; its full sequence is NADH-quinone oxidoreductase subunit N 2 (506 aa).

The next 14 helical transmembrane spans lie at 11-31 (SLAYFAPELVLIAAALLLVVW), 44-64 (LVILSLAALACSGGLGAYFLA), 82-102 (FSNLFRVIFALVTGAIVLFLV), 117-137 (SGELFTLILVLSLGMNLMAAS), 140-160 (LLLIYLSLELVSVISFVLAGF), 175-195 (VIFGGVASGIMLYGMSWIFGI), 222-242 (VFVGTAFMLAGFGYKISAAPF), 254-274 (PTPVTAFLSVGPKAAGFAVLI), 289-309 (GVATPWPVLFGCLAMATMTVG), 323-345 (LAYSSIAHAGYMLLGFSVFSGAG), 356-376 (YCFMNLGAFMVVMAVAEESGG), 394-414 (AAAMAVFLVSLTGLPPTAGFI), 419-439 (LFSALLAAGGAWSWVIAVVGV), and 472-492 (LLGGTACALAIPTVLLGVYWG).

It belongs to the complex I subunit 2 family. NDH-1 is composed of 14 different subunits. Subunits NuoA, H, J, K, L, M, N constitute the membrane sector of the complex.

It localises to the cell inner membrane. The enzyme catalyses a quinone + NADH + 5 H(+)(in) = a quinol + NAD(+) + 4 H(+)(out). Functionally, NDH-1 shuttles electrons from NADH, via FMN and iron-sulfur (Fe-S) centers, to quinones in the respiratory chain. The immediate electron acceptor for the enzyme in this species is believed to be ubiquinone. Couples the redox reaction to proton translocation (for every two electrons transferred, four hydrogen ions are translocated across the cytoplasmic membrane), and thus conserves the redox energy in a proton gradient. This Sorangium cellulosum (strain So ce56) (Polyangium cellulosum (strain So ce56)) protein is NADH-quinone oxidoreductase subunit N 2.